The chain runs to 467 residues: Mitogen-activated protein kinase kinase kinase 8 (467 aa).

The residue at position 80 (threonine 80) is a Phosphothreonine. Phosphoserine occurs at positions 138 and 141. ATP is bound by residues 144 to 152 and lysine 167; that span reads VPRGAFGKV. Residues 146–388 form the Protein kinase domain; the sequence is RGAFGKVYLA…AADLLKHEAL (243 aa). Aspartate 253 acts as the Proton acceptor in catalysis. A Phosphothreonine modification is found at threonine 290. A phosphoserine mark is found at serine 400 and serine 443.

The protein belongs to the protein kinase superfamily. STE Ser/Thr protein kinase family. MAP kinase kinase kinase subfamily. As to quaternary structure, forms a ternary complex with NFKB1/p105 and TNIP2. Interacts with NFKB1; the interaction increases the stability of MAP3K8 but inhibits its MEK phosphorylation activity, whereas loss of interaction following LPS stimulation leads to its degradation. Interacts with CD40 and TRAF6; the interaction is required for ERK activation. Interacts with KSR2; the interaction inhibits ERK and NF-kappa-B activation. Mg(2+) is required as a cofactor. Post-translationally, autophosphorylated. Expressed in spleen, thymus, liver and lung.

It localises to the cytoplasm. It carries out the reaction L-seryl-[protein] + ATP = O-phospho-L-seryl-[protein] + ADP + H(+). It catalyses the reaction L-threonyl-[protein] + ATP = O-phospho-L-threonyl-[protein] + ADP + H(+). Functionally, required for lipopolysaccharide (LPS)-induced, TLR4-mediated activation of the MAPK/ERK pathway in macrophages, thus being critical for production of the pro-inflammatory cytokine TNF-alpha (TNF) during immune responses. Involved in the regulation of T-helper cell differentiation and IFNG expression in T-cells. Involved in mediating host resistance to bacterial infection through negative regulation of type I interferon (IFN) production. Transduces CD40 and TNFRSF1A signals that activate ERK in B-cells and macrophages, and thus may play a role in the regulation of immunoglobulin production. May also play a role in the transduction of TNF signals that activate JNK and NF-kappa-B in some cell types. In adipocytes, activates MAPK/ERK pathway in an IKBKB-dependent manner in response to IL1B and TNF, but not insulin, leading to induction of lipolysis. Plays a role in the cell cycle. In Rattus norvegicus (Rat), this protein is Mitogen-activated protein kinase kinase kinase 8 (Map3k8).